A 309-amino-acid polypeptide reads, in one-letter code: Protein FdhE (309 aa).

It belongs to the FdhE family.

The protein resides in the cytoplasm. Its function is as follows. Necessary for formate dehydrogenase activity. The chain is Protein FdhE from Escherichia coli O9:H4 (strain HS).